The following is a 263-amino-acid chain: Probable HTH-type transcriptional regulator ArcR (263 aa).

The HTH iclR-type domain maps to 14 to 74 (ITSVLNAVEI…DGDGTYQLGD (61 aa)). A DNA-binding region (H-T-H motif) is located at residues 35–54 (LQELTTELDLTKATIHTYMA). An IclR-ED domain is found at 89 to 262 (LYRLGREEID…ANIIEVRLET (174 aa)).

In terms of biological role, probably regulates transcription of the arcABC operon. The protein is Probable HTH-type transcriptional regulator ArcR (arcR) of Halobacterium salinarum (strain ATCC 29341 / DSM 671 / R1).